Here is a 177-residue protein sequence, read N- to C-terminus: SAYSvFN domain-containing protein 1 (177 aa).

Over 1-100 the chain is Cytoplasmic; that stretch reads MADFQEQLRQ…CLKYTLWTVY (100 aa). Positions 57-70 are enriched in polar residues; it reads SENSQDEAVTSSES. The segment at 57 to 85 is disordered; the sequence is SENSQDEAVTSSESELVPEEQPTRSTDHH. Residues 101–121 constitute an intramembrane region (helical); it reads LLFWITLYVIAIKLSFGLVFL. At 122 to 177 the chain is on the cytoplasmic side; it reads MFSALFGIYFNTRTEPKKRNEMSAYSVFNKNCESIDGTLKAEQFEREIRYGSGSVR.

The protein belongs to the SAYSD1 family.

Its subcellular location is the endoplasmic reticulum membrane. In terms of biological role, ufmylation 'reader' component of a translocation-associated quality control pathway, a mechanism that takes place when a ribosome has stalled during translation, and which is required to degrade clogged substrates. Specifically recognizes and binds ufmylated ribosomes when a ribosome has stalled, promoting the transport of stalled nascent chain to lysosomes for degradation. The polypeptide is SAYSvFN domain-containing protein 1 (Drosophila melanogaster (Fruit fly)).